The following is a 99-amino-acid chain: Small ribosomal subunit protein bS20 (99 aa).

This sequence belongs to the bacterial ribosomal protein bS20 family.

In terms of biological role, binds directly to 16S ribosomal RNA. The sequence is that of Small ribosomal subunit protein bS20 from Prochlorococcus marinus (strain SARG / CCMP1375 / SS120).